We begin with the raw amino-acid sequence, 275 residues long: Rhamnulose-1-phosphate aldolase (275 aa).

Residue E117 is part of the active site. H141, H143, and H212 together coordinate Zn(2+).

The protein belongs to the aldolase class II family. RhaD subfamily. As to quaternary structure, homotetramer. Zn(2+) is required as a cofactor.

The protein resides in the cytoplasm. It carries out the reaction L-rhamnulose 1-phosphate = (S)-lactaldehyde + dihydroxyacetone phosphate. The protein operates within carbohydrate degradation; L-rhamnose degradation; glycerone phosphate from L-rhamnose: step 3/3. In terms of biological role, catalyzes the reversible cleavage of L-rhamnulose-1-phosphate to dihydroxyacetone phosphate (DHAP) and L-lactaldehyde. The chain is Rhamnulose-1-phosphate aldolase from Salmonella dublin (strain CT_02021853).